A 100-amino-acid chain; its full sequence is Large ribosomal subunit protein uL23 (100 aa).

Belongs to the universal ribosomal protein uL23 family. As to quaternary structure, part of the 50S ribosomal subunit. Contacts protein L29, and trigger factor when it is bound to the ribosome.

One of the early assembly proteins it binds 23S rRNA. One of the proteins that surrounds the polypeptide exit tunnel on the outside of the ribosome. Forms the main docking site for trigger factor binding to the ribosome. This is Large ribosomal subunit protein uL23 from Aeromonas hydrophila subsp. hydrophila (strain ATCC 7966 / DSM 30187 / BCRC 13018 / CCUG 14551 / JCM 1027 / KCTC 2358 / NCIMB 9240 / NCTC 8049).